The primary structure comprises 436 residues: Nucleolar protein 4-like (436 aa).

The disordered stretch occupies residues 1-184 (MSDSTWMSAD…KMNDSEGMDP (184 aa)). Positions 41–61 (SESGSGNGSSTLNPSTSSSTQ) are enriched in low complexity. At Ser-130 the chain carries Phosphoserine. Residues 160–169 (ADDDDDDHDD) are compositionally biased toward acidic residues. A compositionally biased stretch (basic and acidic residues) spans 170–184 (HEDNDKMNDSEGMDP). Ser-295 carries the post-translational modification Phosphoserine. Residues 351–366 (QPPASLQTGNHSNGPT) show a composition bias toward polar residues. The segment at 351-400 (QPPASLQTGNHSNGPTDLSMKGGASTTSTTPTPTPSSTSTSRPVPTAQLS) is disordered. Over residues 375–396 (STTSTTPTPTPSSTSTSRPVPT) the composition is skewed to low complexity.

The sequence is that of Nucleolar protein 4-like (NOL4L) from Homo sapiens (Human).